The chain runs to 190 residues: Dynein axonemal light chain 1 (190 aa).

Ala2 carries the N-acetylalanine modification. LRR repeat units follow at residues 47-69 (LANC…LNGL), 70-93 (KNLR…AVGD), 95-114 (LEEL…IHVM), and 115-138 (RKLK…KLAE). Ser56 is subject to Phosphoserine.

The protein belongs to the dynein light chain LC1-type family. In terms of assembly, interacts with ZMYND10 (via C-terminus). Interacts with DNAH5, a outer arm dynein heavy chain. Interacts with tubulin located within the A-tubule of the outer doublets in a ATP-independent manner.

It localises to the cytoplasm. Its subcellular location is the cytoskeleton. The protein resides in the cilium axoneme. Its function is as follows. Part of the multisubunit axonemal ATPase complexes that generate the force for cilia motility and govern beat frequency. Component of the outer arm dynein (ODA). May be involved in a mechanosensory feedback mechanism controlling ODA activity based on external conformational cues by tethering the outer arm dynein heavy chain (DNAH5) to the microtubule within the axoneme. Important for ciliary function in the airways and for the function of the cilia that produce the nodal flow essential for the determination of the left-right asymmetry. In Rattus norvegicus (Rat), this protein is Dynein axonemal light chain 1.